The following is a 73-amino-acid chain: Acyl carrier protein (73 aa).

The Carrier domain occupies Met-1–Lys-73. O-(pantetheine 4'-phosphoryl)serine is present on Ser-35.

The protein belongs to the acyl carrier protein (ACP) family. 4'-phosphopantetheine is transferred from CoA to a specific serine of apo-ACP by AcpS. This modification is essential for activity because fatty acids are bound in thioester linkage to the sulfhydryl of the prosthetic group.

Its subcellular location is the cytoplasm. It functions in the pathway lipid metabolism; fatty acid biosynthesis. In terms of biological role, carrier of the growing fatty acid chain in fatty acid biosynthesis. The sequence is that of Acyl carrier protein from Lactococcus lactis subsp. lactis (strain IL1403) (Streptococcus lactis).